Here is a 429-residue protein sequence, read N- to C-terminus: 3-phosphoshikimate 1-carboxyvinyltransferase (429 aa).

3-phosphoshikimate-binding residues include Lys22, Ser23, and Arg27. Lys22 contacts phosphoenolpyruvate. 2 residues coordinate phosphoenolpyruvate: Gly94 and Arg122. Ser167, Gln169, Asp315, and Lys342 together coordinate 3-phosphoshikimate. Gln169 is a phosphoenolpyruvate binding site. The active-site Proton acceptor is the Asp315. Phosphoenolpyruvate contacts are provided by Arg346 and Arg388.

It belongs to the EPSP synthase family. Monomer.

It localises to the cytoplasm. It catalyses the reaction 3-phosphoshikimate + phosphoenolpyruvate = 5-O-(1-carboxyvinyl)-3-phosphoshikimate + phosphate. It functions in the pathway metabolic intermediate biosynthesis; chorismate biosynthesis; chorismate from D-erythrose 4-phosphate and phosphoenolpyruvate: step 6/7. Its function is as follows. Catalyzes the transfer of the enolpyruvyl moiety of phosphoenolpyruvate (PEP) to the 5-hydroxyl of shikimate-3-phosphate (S3P) to produce enolpyruvyl shikimate-3-phosphate and inorganic phosphate. The chain is 3-phosphoshikimate 1-carboxyvinyltransferase from Geobacter metallireducens (strain ATCC 53774 / DSM 7210 / GS-15).